The following is a 258-amino-acid chain: MARSGFEVQKVTVEALFLREIRTRFGKFRLGYLWAILEPSAHLLILLGIFGYIMHRTMPDISFPVFLLNGLIPFFIFSSISNRSVGAIEANQGLFNYRPVKPIDTIIARALLETLIYVAVYILLMLIVWMAGEYFEITNFLQLVLTWSLLIILSCGIGLIFMVVGKTFPEMQKVLPILLKPLYFISCIMFPLHSIPKQYWSYLLWNPLVHVVELSREAVMPGYISEGVSLNYLAMFTLVTLFIGLALYRTREEAMLTS.

The region spanning 30-251 (LGYLWAILEP…FIGLALYRTR (222 aa)) is the ABC transmembrane type-2 domain. Transmembrane regions (helical) follow at residues 33 to 53 (LWAI…FGYI), 61 to 81 (ISFP…SSIS), 110 to 130 (ALLE…IVWM), 144 to 164 (VLTW…FMVV), 175 to 195 (LPIL…LHSI), and 227 to 247 (GVSL…GLAL).

This sequence belongs to the ABC-2 integral membrane protein family.

The protein localises to the cell inner membrane. KpsM and KpsT constitute a system for the transport of polysialic acid across the cytoplasmic membrane. This chain is Polysialic acid transport protein KpsM (kpsM), found in Escherichia coli.